A 347-amino-acid chain; its full sequence is uncharacterized protein (347 aa).

It localises to the cytoplasm. It is found in the nucleus. This is an uncharacterized protein from Schizosaccharomyces pombe (strain 972 / ATCC 24843) (Fission yeast).